A 230-amino-acid chain; its full sequence is UPF0502 protein Patl_1161 (230 aa).

This sequence belongs to the UPF0502 family.

The sequence is that of UPF0502 protein Patl_1161 from Pseudoalteromonas atlantica (strain T6c / ATCC BAA-1087).